We begin with the raw amino-acid sequence, 354 residues long: Serum paraoxonase/arylesterase 2 (354 aa).

A glycan (N-linked (GlcNAc...) asparagine) is linked at asparagine 29. Cysteine 42 and cysteine 352 form a disulfide bridge. Ca(2+)-binding residues include glutamate 53 and aspartate 54. Histidine 114 serves as the catalytic Proton acceptor. Residues isoleucine 116, asparagine 167, aspartate 168, and asparagine 223 each coordinate Ca(2+). The N-linked (GlcNAc...) asparagine glycan is linked to asparagine 254. Aspartate 268 and asparagine 269 together coordinate Ca(2+). Asparagine 269 and asparagine 323 each carry an N-linked (GlcNAc...) asparagine glycan.

Belongs to the paraoxonase family. Requires Ca(2+) as cofactor. Post-translationally, glycosylated. In terms of processing, the signal sequence is not cleaved.

The protein resides in the membrane. It carries out the reaction a phenyl acetate + H2O = a phenol + acetate + H(+). The enzyme catalyses An aryl dialkyl phosphate + H2O = dialkyl phosphate + an aryl alcohol.. Its function is as follows. The absence of paraoxonase activity in turkey and chicken blood and in turkey liver indicates that PON2, if expressed, does not hydrolyze paraoxon. This Gallus gallus (Chicken) protein is Serum paraoxonase/arylesterase 2 (PON2).